Reading from the N-terminus, the 440-residue chain is Zinc finger MYND domain-containing protein 10 (440 aa).

Cys394, Cys397, Cys405, Cys408, Cys414, Cys418, His426, and Cys430 together coordinate Zn(2+). The MYND-type zinc-finger motif lies at 394-430; that stretch reads CAYCSAEASKRCSRCQKVWYCCRECQVKHWEKHGKTC.

This sequence belongs to the ZMYND10 family. In terms of assembly, interacts (via C-terminus) with DNAAF11 (via CS domain); this interaction stabilizes DNAAF11 at the protein level. Interacts (via C-terminus) with DNAL1; this interaction stabilizes DNAL1 at the protein level. Interacts with DNAAF4, HSPA8, IQUB, RUVBL2 and DYNTL5.

The protein resides in the cytoplasm. The protein localises to the cytoskeleton. It localises to the microtubule organizing center. It is found in the centrosome. Its subcellular location is the centriolar satellite. The protein resides in the apical cell membrane. The protein localises to the dynein axonemal particle. In terms of biological role, plays a role in axonemal structure organization and motility. Involved in axonemal pre-assembly of inner and outer dynein arms (IDA and ODA, respectively) for proper axoneme building for cilia motility. May act by indirectly regulating transcription of dynein proteins. The chain is Zinc finger MYND domain-containing protein 10 (Zmynd10) from Rattus norvegicus (Rat).